A 259-amino-acid chain; its full sequence is Transcription factor bHLH125 (259 aa).

Residues serine 73–leucine 125 enclose the bHLH domain.

Homodimer.

The protein resides in the nucleus. This chain is Transcription factor bHLH125 (BHLH125), found in Arabidopsis thaliana (Mouse-ear cress).